A 534-amino-acid chain; its full sequence is tRNA uridine(34) acetyltransferase (534 aa).

Residues 70-330 (KPVRTISGVA…GEFKPYREEE (261 aa)) are radical S-adenosyl-L-methionine (rSAM). Positions 73 to 344 (RTISGVAVVA…ISYAKSIMPK (272 aa)) constitute a Radical SAM core domain. 3 residues coordinate [4Fe-4S] cluster: C90, C95, and C98. K150 is an acetyl-CoA binding site. A disulfide bond links C384 and C389. The N-acetyltransferase domain maps to 387-534 (IRCREVGHVY…RVGAYMGKEL (148 aa)). Acetyl-CoA is bound by residues 461–464 (QLHV), 485–487 (YGR), and Y518.

The protein belongs to the ELP3 family. Requires [4Fe-4S] cluster as cofactor.

It carries out the reaction uridine(34) in tRNA + acetyl-CoA + S-adenosyl-L-methionine + H2O = 5-(carboxymethyl)uridine(34) in tRNA + 5'-deoxyadenosine + L-methionine + CoA + 2 H(+). It functions in the pathway tRNA modification. Its function is as follows. tRNA uridine(34) acetyltransferase, which mediates formation of carboxymethyluridine in the wobble base at position 34 in tRNAs. The proposed mechanism is the following: (i) recruits S-adenosyl-L-methionine and cleaves it to generate a 5'-deoxyadenosine radical (5'-dA) in the radical S-adenosyl-L-methionine (rSAM) region, (ii) hydrolyzes acetyl-CoA in the N-acetyltransferase domain and (iii) an acetyl radical is formed by the products of the two domains and (iv) is transferred onto the C5 position of uridine(34) in the bound tRNA molecule. Does not show protein lysine acetyltransferase activity. This Methanocaldococcus infernus (strain DSM 11812 / JCM 15783 / ME) protein is tRNA uridine(34) acetyltransferase.